We begin with the raw amino-acid sequence, 209 residues long: Chaperone protein TorD (209 aa).

The protein belongs to the TorD/DmsD family. TorD subfamily.

Its subcellular location is the cytoplasm. Its function is as follows. Involved in the biogenesis of TorA. Acts on TorA before the insertion of the molybdenum cofactor and, as a result, probably favors a conformation of the apoenzyme that is competent for acquiring the cofactor. The protein is Chaperone protein TorD of Shewanella sp. (strain ANA-3).